The primary structure comprises 683 residues: Translation initiation factor IF-2 (683 aa).

In terms of domain architecture, tr-type G spans 182 to 351 (KRPPVVTVMG…ILTAEMEELK (170 aa)). The G1 stretch occupies residues 191–198 (GHVDHGKT). 191–198 (GHVDHGKT) provides a ligand contact to GTP. Residues 216–220 (GITQH) are G2. The tract at residues 237–240 (DTPG) is G3. Residues 237 to 241 (DTPGH) and 291 to 294 (NKID) contribute to the GTP site. Residues 291–294 (NKID) form a G4 region. A G5 region spans residues 327 to 329 (SAH).

This sequence belongs to the TRAFAC class translation factor GTPase superfamily. Classic translation factor GTPase family. IF-2 subfamily.

It is found in the cytoplasm. One of the essential components for the initiation of protein synthesis. Protects formylmethionyl-tRNA from spontaneous hydrolysis and promotes its binding to the 30S ribosomal subunits. Also involved in the hydrolysis of GTP during the formation of the 70S ribosomal complex. The sequence is that of Translation initiation factor IF-2 from Clostridium novyi (strain NT).